The primary structure comprises 561 residues: Putative transport protein KPN78578_08530 (561 aa).

5 consecutive transmembrane segments (helical) span residues Leu-8–Gly-28, Leu-37–Ile-57, Phe-66–Phe-86, Met-94–Phe-114, and His-158–Ala-178. 2 consecutive RCK C-terminal domains span residues Leu-202–Asn-288 and Val-292–Phe-373. 5 helical membrane passes run Leu-383 to Phe-403, Phe-406 to Leu-426, Phe-447 to Gly-467, Ala-478 to Leu-498, and Ala-540 to Leu-560.

Belongs to the AAE transporter (TC 2.A.81) family. YbjL subfamily.

It is found in the cell membrane. This is Putative transport protein KPN78578_08530 from Klebsiella pneumoniae subsp. pneumoniae (strain ATCC 700721 / MGH 78578).